A 46-amino-acid chain; its full sequence is Defensin Tk-AMP-D6.1 (46 aa).

4 disulfide bridges follow: cysteine 3/cysteine 46, cysteine 14/cysteine 34, cysteine 20/cysteine 40, and cysteine 24/cysteine 42.

Functionally, plant defense peptide. The polypeptide is Defensin Tk-AMP-D6.1 (Triticum kiharae (Wheat)).